The following is a 194-amino-acid chain: Leucyl/phenylalanyl-tRNA--protein transferase (194 aa).

This sequence belongs to the L/F-transferase family.

The protein localises to the cytoplasm. The enzyme catalyses N-terminal L-lysyl-[protein] + L-leucyl-tRNA(Leu) = N-terminal L-leucyl-L-lysyl-[protein] + tRNA(Leu) + H(+). It catalyses the reaction N-terminal L-arginyl-[protein] + L-leucyl-tRNA(Leu) = N-terminal L-leucyl-L-arginyl-[protein] + tRNA(Leu) + H(+). It carries out the reaction L-phenylalanyl-tRNA(Phe) + an N-terminal L-alpha-aminoacyl-[protein] = an N-terminal L-phenylalanyl-L-alpha-aminoacyl-[protein] + tRNA(Phe). Functions in the N-end rule pathway of protein degradation where it conjugates Leu, Phe and, less efficiently, Met from aminoacyl-tRNAs to the N-termini of proteins containing an N-terminal arginine or lysine. The chain is Leucyl/phenylalanyl-tRNA--protein transferase from Pelodictyon phaeoclathratiforme (strain DSM 5477 / BU-1).